We begin with the raw amino-acid sequence, 246 residues long: D-erythrulose reductase (246 aa).

Residue 13–41 (LVTGAGKGIGRAVAVALCKAGARVTALSR) participates in NADP(+) binding. Ser138 is a binding site for substrate. Catalysis depends on Tyr151, which acts as the Proton acceptor. Residue Lys155 coordinates NADP(+).

This sequence belongs to the short-chain dehydrogenases/reductases (SDR) family. Homotetramer. Post-translationally, the N-terminus is blocked. As to expression, highly expressed in kidney, and also found in high amounts in liver and testis. Low expression seen in all other tissues tested.

The protein localises to the cytoplasm. The catalysed reaction is D-threitol + NADP(+) = D-erythrulose + NADPH + H(+). It carries out the reaction xylitol + NADP(+) = L-xylulose + NADPH + H(+). Catalyzes the reduction of D-erythrulose to D-threitol with the concomitant oxidation of NAD(P)H to NAD(P)(+). NADH is less effective than NADPH. May also catalyze the reduction of L-xylulose. The polypeptide is D-erythrulose reductase (DER) (Gallus gallus (Chicken)).